A 260-amino-acid chain; its full sequence is tRNA pseudouridine synthase C (260 aa).

Asp-54 is an active-site residue.

It belongs to the pseudouridine synthase RluA family.

It catalyses the reaction uridine(65) in tRNA = pseudouridine(65) in tRNA. Responsible for synthesis of pseudouridine from uracil-65 in transfer RNAs. This is tRNA pseudouridine synthase C (truC) from Escherichia coli O6:H1 (strain CFT073 / ATCC 700928 / UPEC).